The primary structure comprises 341 residues: Ketol-acid reductoisomerase (NADP(+)) (341 aa).

Residues 2–181 (AKVYYNGDVN…GAARAGVLET (180 aa)) form the KARI N-terminal Rossmann domain. Residues 25-28 (YGSQ), Arg-48, Ser-52, and 82-85 (DEHQ) each bind NADP(+). The active site involves His-107. Position 133 (Gly-133) interacts with NADP(+). The KARI C-terminal knotted domain maps to 182–327 (TFKEETETDL…RELREMMPFV (146 aa)). Mg(2+) contacts are provided by Asp-190, Glu-194, Glu-226, and Glu-230. Ser-251 contacts substrate.

The protein belongs to the ketol-acid reductoisomerase family. Mg(2+) is required as a cofactor.

It catalyses the reaction (2R)-2,3-dihydroxy-3-methylbutanoate + NADP(+) = (2S)-2-acetolactate + NADPH + H(+). The catalysed reaction is (2R,3R)-2,3-dihydroxy-3-methylpentanoate + NADP(+) = (S)-2-ethyl-2-hydroxy-3-oxobutanoate + NADPH + H(+). It participates in amino-acid biosynthesis; L-isoleucine biosynthesis; L-isoleucine from 2-oxobutanoate: step 2/4. It functions in the pathway amino-acid biosynthesis; L-valine biosynthesis; L-valine from pyruvate: step 2/4. In terms of biological role, involved in the biosynthesis of branched-chain amino acids (BCAA). Catalyzes an alkyl-migration followed by a ketol-acid reduction of (S)-2-acetolactate (S2AL) to yield (R)-2,3-dihydroxy-isovalerate. In the isomerase reaction, S2AL is rearranged via a Mg-dependent methyl migration to produce 3-hydroxy-3-methyl-2-ketobutyrate (HMKB). In the reductase reaction, this 2-ketoacid undergoes a metal-dependent reduction by NADPH to yield (R)-2,3-dihydroxy-isovalerate. The sequence is that of Ketol-acid reductoisomerase (NADP(+)) from Shouchella clausii (strain KSM-K16) (Alkalihalobacillus clausii).